The chain runs to 100 residues: Urease subunit gamma (100 aa).

It belongs to the urease gamma subunit family. In terms of assembly, heterotrimer of UreA (gamma), UreB (beta) and UreC (alpha) subunits. Three heterotrimers associate to form the active enzyme.

The protein resides in the cytoplasm. It carries out the reaction urea + 2 H2O + H(+) = hydrogencarbonate + 2 NH4(+). Its pathway is nitrogen metabolism; urea degradation; CO(2) and NH(3) from urea (urease route): step 1/1. The protein is Urease subunit gamma of Escherichia coli.